The following is a 55-amino-acid chain: Ferredoxin (55 aa).

4Fe-4S ferredoxin-type domains are found at residues 2–27 (FVIN…TQGD) and 28–55 (TQFV…PNQE). Residues C8, C11, C14, C18, C37, C40, C43, and C47 each coordinate [4Fe-4S] cluster.

It depends on [4Fe-4S] cluster as a cofactor.

In terms of biological role, ferredoxins are iron-sulfur proteins that transfer electrons in a wide variety of metabolic reactions. The protein is Ferredoxin of Clostridium butyricum.